The following is a 262-amino-acid chain: 3-methyl-2-oxobutanoate hydroxymethyltransferase (262 aa).

Residues Asp-42 and Asp-81 each contribute to the Mg(2+) site. 3-methyl-2-oxobutanoate is bound by residues 42–43, Asp-81, and Lys-110; that span reads DS. Glu-112 contacts Mg(2+). Glu-180 (proton acceptor) is an active-site residue.

The protein belongs to the PanB family. Homodecamer; pentamer of dimers. Mg(2+) serves as cofactor.

The protein localises to the cytoplasm. It catalyses the reaction 3-methyl-2-oxobutanoate + (6R)-5,10-methylene-5,6,7,8-tetrahydrofolate + H2O = 2-dehydropantoate + (6S)-5,6,7,8-tetrahydrofolate. It participates in cofactor biosynthesis; (R)-pantothenate biosynthesis; (R)-pantoate from 3-methyl-2-oxobutanoate: step 1/2. Functionally, catalyzes the reversible reaction in which hydroxymethyl group from 5,10-methylenetetrahydrofolate is transferred onto alpha-ketoisovalerate to form ketopantoate. The polypeptide is 3-methyl-2-oxobutanoate hydroxymethyltransferase (Legionella pneumophila (strain Lens)).